An 808-amino-acid chain; its full sequence is Phenylalanine--tRNA ligase beta subunit (808 aa).

The 110-residue stretch at 40-149 (RPELDFVKIV…DQAEVGKTIR (110 aa)) folds into the tRNA-binding domain. The B5 domain maps to 407–484 (HKEVRIHTDI…RTKGYDTIQV (78 aa)). Positions 462, 468, 471, and 472 each coordinate Mg(2+). Residues 716-808 (SQFPEAEIDL…LAGKNGFVLR (93 aa)) form the FDX-ACB domain.

It belongs to the phenylalanyl-tRNA synthetase beta subunit family. Type 1 subfamily. As to quaternary structure, tetramer of two alpha and two beta subunits. Mg(2+) is required as a cofactor.

Its subcellular location is the cytoplasm. It carries out the reaction tRNA(Phe) + L-phenylalanine + ATP = L-phenylalanyl-tRNA(Phe) + AMP + diphosphate + H(+). The polypeptide is Phenylalanine--tRNA ligase beta subunit (Leptospira interrogans serogroup Icterohaemorrhagiae serovar copenhageni (strain Fiocruz L1-130)).